The following is an 850-amino-acid chain: Probable beta-glucosidase J (850 aa).

Residues Asn43 and Asn52 are each glycosylated (N-linked (GlcNAc...) asparagine). The active site involves Asp254. One can recognise a PA14 domain in the interval 423–583; sequence TGERGYTFRV…DAETAIKQAV (161 aa). A glycan (N-linked (GlcNAc...) asparagine) is linked at Asn508.

Belongs to the glycosyl hydrolase 3 family.

It is found in the secreted. The catalysed reaction is Hydrolysis of terminal, non-reducing beta-D-glucosyl residues with release of beta-D-glucose.. It functions in the pathway glycan metabolism; cellulose degradation. Functionally, beta-glucosidases are one of a number of cellulolytic enzymes involved in the degradation of cellulosic biomass. Catalyzes the last step releasing glucose from the inhibitory cellobiose. The chain is Probable beta-glucosidase J (bglJ) from Emericella nidulans (strain FGSC A4 / ATCC 38163 / CBS 112.46 / NRRL 194 / M139) (Aspergillus nidulans).